A 210-amino-acid chain; its full sequence is Proteasome subunit beta (210 aa).

A propeptide spans 1 to 9 (MDNDKHLKG) (removed in mature form; by autocatalysis). Residue threonine 10 is the Nucleophile of the active site.

Belongs to the peptidase T1B family. The 20S proteasome core is composed of 14 alpha and 14 beta subunits that assemble into four stacked heptameric rings, resulting in a barrel-shaped structure. The two inner rings, each composed of seven catalytic beta subunits, are sandwiched by two outer rings, each composed of seven alpha subunits. The catalytic chamber with the active sites is on the inside of the barrel. Has a gated structure, the ends of the cylinder being occluded by the N-termini of the alpha-subunits. Is capped at one or both ends by the proteasome regulatory ATPase, PAN.

Its subcellular location is the cytoplasm. The enzyme catalyses Cleavage of peptide bonds with very broad specificity.. The formation of the proteasomal ATPase PAN-20S proteasome complex, via the docking of the C-termini of PAN into the intersubunit pockets in the alpha-rings, triggers opening of the gate for substrate entry. Interconversion between the open-gate and close-gate conformations leads to a dynamic regulation of the 20S proteasome proteolysis activity. Its function is as follows. Component of the proteasome core, a large protease complex with broad specificity involved in protein degradation. The sequence is that of Proteasome subunit beta from Methanococcoides burtonii (strain DSM 6242 / NBRC 107633 / OCM 468 / ACE-M).